A 611-amino-acid chain; its full sequence is BTB/POZ domain-containing protein 9 (611 aa).

One can recognise a BTB domain in the interval 36 to 104; it reads GDVTFVVEKK…IYTGRATLTD (69 aa). In terms of domain architecture, BACK spans 142–240; the sequence is VCMTFDVASL…SLTELLNVVR (99 aa). The segment at 560 to 611 is disordered; the sequence is QSAQKDSSDEPGTGGASAAGQQLDPHALQAPSGSSLPSSPGSNSRSPNRQHQ. The segment covering 586–611 has biased composition (low complexity); it reads ALQAPSGSSLPSSPGSNSRSPNRQHQ.

This chain is BTB/POZ domain-containing protein 9 (BTBD9), found in Bos taurus (Bovine).